The following is a 338-amino-acid chain: Tetraacyldisaccharide 4'-kinase (338 aa).

51-58 is an ATP binding site; the sequence is HLGGAGKT.

This sequence belongs to the LpxK family.

It carries out the reaction a lipid A disaccharide + ATP = a lipid IVA + ADP + H(+). It functions in the pathway glycolipid biosynthesis; lipid IV(A) biosynthesis; lipid IV(A) from (3R)-3-hydroxytetradecanoyl-[acyl-carrier-protein] and UDP-N-acetyl-alpha-D-glucosamine: step 6/6. Its function is as follows. Transfers the gamma-phosphate of ATP to the 4'-position of a tetraacyldisaccharide 1-phosphate intermediate (termed DS-1-P) to form tetraacyldisaccharide 1,4'-bis-phosphate (lipid IVA). The sequence is that of Tetraacyldisaccharide 4'-kinase from Rhodopseudomonas palustris (strain BisB5).